We begin with the raw amino-acid sequence, 527 residues long: uncharacterized protein (527 aa).

In terms of domain architecture, PE spans 1–93 (MSYMIAVPDM…AGAYASAEAT (93 aa)). 3 stretches are compositionally biased toward gly residues: residues 264–286 (IHGH…GVQG), 292–384 (GAAG…AGNG), and 472–515 (NGGD…GGSR). Disordered stretches follow at residues 264 to 384 (IHGH…AGNG) and 472 to 527 (NGGD…TPGQ).

Belongs to the mycobacterial PE family. PGRS subfamily.

This is an uncharacterized protein from Mycobacterium tuberculosis (strain CDC 1551 / Oshkosh).